Reading from the N-terminus, the 407-residue chain is O-methyltransferase verK (407 aa).

S-adenosyl-L-methionine-binding positions include E263 and 295–297 (GDF). The active-site Proton acceptor is H314.

It belongs to the class I-like SAM-binding methyltransferase superfamily. Cation-independent O-methyltransferase family.

The protein operates within mycotoxin biosynthesis. Functionally, O-methyltransferase; part of the gene cluster that mediates the biosynthesis of 11'-deoxyverticillin A, one of the dimeric epipolythiodioxopiperazines (ETPs) from the verticillin family that act as mycotoxins. 11'-deoxyverticillin A is required for normal conidiation. The nonribosomal peptide synthetase verP is speculated to be responsible for condensation of amino acids to form the carbon skeleton of verticillin, whereas the cluster-specific tailoring enzymes are involved in further modifications leading to the production of 11'-deoxyverticillin A. This chain is O-methyltransferase verK, found in Clonostachys rogersoniana.